Consider the following 306-residue polypeptide: Ankyrin repeat domain-containing protein 23 (306 aa).

Positions 41–90 (QEAVAREKLKLEEEKRKKLERFNSSRLTLDNLTDLENLVQRRRKKRQRHK) form a coiled coil. The disordered stretch occupies residues 78–107 (LVQRRRKKRQRHKVPPREPESGAEPQPQVP). A compositionally biased stretch (basic residues) spans 80 to 91 (QRRRKKRQRHKV). ANK repeat units lie at residues 144–173 (LHRT…AIEV), 177–206 (LDRT…QVNA), 210–239 (IWST…HINA), and 243–272 (EGDT…KLGV). An interaction with TTN region spans residues 179–196 (RTPVFWACRGGHLDILKR).

As to quaternary structure, interacts with titin/TTN and MYPN.

Its subcellular location is the nucleus. May be involved in the energy metabolism. Could be a molecular link between myofibrillar stretch-induced signaling pathways and muscle gene expression. In Mus musculus (Mouse), this protein is Ankyrin repeat domain-containing protein 23 (Ankrd23).